The chain runs to 90 residues: Probable Fe(2+)-trafficking protein (90 aa).

It belongs to the Fe(2+)-trafficking protein family.

Its function is as follows. Could be a mediator in iron transactions between iron acquisition and iron-requiring processes, such as synthesis and/or repair of Fe-S clusters in biosynthetic enzymes. The protein is Probable Fe(2+)-trafficking protein of Verminephrobacter eiseniae (strain EF01-2).